The sequence spans 2273 residues: KGKTITHGQSWGARRIHSHFYITIFTITCIRIGQYKLALYLDPYRFYNITGSQIVRLKGQRPEYRKRIFAHSYRHSSRIGLNFPSRRRYSNYVDRGNIHKHTRLPPQFIGLNTVESAQPSILRDFVDLRGGHTVISKILIANNGIAAVKEMRSIRKWAYETFNDEKIIQFVVMATPDDLHANSEYIRMADQYVQVPGGTNNNNYANIDLILDVAEQTDVDAVWAGWGHASENPCLPELLASSQRKILFIGPPGRAMRSLGDKISSTIVAQSAKIPCIPWSGSHIDTIHIDNKTNFVSVPDDVYVRGCCSSPEDALEKAKLIGFPVMIKASEGGGGKGIRRVDNEDDFIALYRQAVNETPGSPMFVMKVVTDARHLEVQLLADQYGTNITLFGRDCSIQRRHQKIIEEAPVTITKPETFQRMERAAIRLGELVGYVSAGTVEYLYSPKDDKFYFLELNPRLQVEHPTTEMISGVNLPATQLQIAMGIPMHMISDIRKLYGLDPTGTSYIDFKNLKRPSPKGHCISCRITSEDPNEGFKPSTGKIHELNFRSSSNVWGYFSVGNNGAIHSFSDSQFGHIFAVGNDRQDAKQNMVLALKDFSIRGEFKTPIEYLIELLETRDFESNNISTGWLDDLILKNLSSDSKLDPTLAIICGAAMKAYVFTEKVRNKYLELLRRGQVPPKDFLKTKFPVDFIFDNNRYLFNVAQSSEEQFILSINKSQCEVNVQKLSSDCLLISVDGKCHTVYWKDDIRGTRLSIDSNTIFLEAELNPTQVISPTPGKLVKYLVRSGDHVFAGQQYAEIEIMKMQMPLVAKSDGVIELLRQPGSIIEAGDVIAKLTLDSPSKANESSLYRGELPVLGPPLIEGSRPNHKLRVLINRLENILNGYHENSGIETTLKELIKILRDGRLPYSEWDSQISTVRNRLPRQLNEGLGNLVKKSVSFPAKELHKLMKRYLEENTNDHVVYVALQPLLKISERYSEGLANHECEIFLKLIKKYYAVEKIFENHDIHEERNLLNLRRKDLTNLKKILCISLSHANVVAKNKLVTAILHEYEPLCQDSSKMSLKFRAVIHDLASLESKWAKEVAVKARSVLLRGIFPPIKKRKEHIKTLLQLHIKDTGAENIHSRNIYSCMRDFGNLIHSNLIQLQDLFFFFGHQDTALSSIASEIYARYAYGNYQLKSIKIHKGAPDLLMSWQFSSLRNYLVNSDGESDEFTKLSKPPSTSGKSSANSFGLLVNMRALESLEKTLDEVYEQIHIPEERLSSGENSLIVNILSPIRYRSENDLIKTLKIKLHENERGLSKLKVNRITFAFIAANAPAVKFYSFDGTTYDEISQIRNMDPSYEAPLELGKMSNYKIRSLPTYDSSIRIFEGISKFTPLDKRFFVRKIINSFMYNDQKTTEENLKAEINAQVVYMLEHLGAVDISNSDLNHIFLSFNTVLNIPVHRLEEIVSTILKTHETRLFQERITDVEICISVECLETKKPAPLRLLISNKSGYVVKIETYYEKIGKNGNLILEPCSEQSHYSQKSLSLPYSVKDWLQPKRYKAQFMGTTYVYDFPGLFHQAAIQQWKRYFPKHKLNDSFFSWVELIEQNGNLIKVNREPGLNNIGMVAFEIMVQTPEYPEGRNMIVISNDITYNIGSFGPREDLFFDRVTNYARERGIPRIYLAANSGAKLGIAEELIPLFRVAWNDPSDPTKGFQYLYLAPKDMQLLKDSGKGNSVVVEHKMVYGEERYIIKAIVGFEEGLGVECLQGSGLIAGATSKAYRDIFTITAVTCRSVGIGSYLVRLGQRTIQVEDKPIILTGASAINKVLGTDIYTSNLQIGGTQIMYKNGIAHLTASNDMKAIEKIMTWLSYVPAKRDMSPPLLETMDRWDRDVDFKPAKQVPYEARWLIEGKWDSNNNFQSGLFDKDSFFETLSGWAKGVIVGRARLGGIPVGVIAVETKTIEEIIPADPANLDSSEFSVKEAGQVWYPNSAFKTAQTINDFNYGEQLPLIILANWRGFSGGQRDMYNEVLKYGSFIVDALVDYKQPILIYIPPFGELRGGSWVVIDPTINPEQMEMYADVESRGGVLEPDGVVSIKYRKEKMIETMIRLDSTYGHLRRTLTEKKLSLEKQNDLTKRLKIRERQLIPIYNQISIQFADLHDRSTRMLVKGVIRNELEWKKSRRFLYWRLRRRLNEGQVIKRLQKKTCDNKTKMKYDDLLKIVQSWYNDLDVNDDRAVVEFIERNSKKIDKNIEEFEISLLIDELKKKFEDRRGNIVLEELTRLVDSKRKR.

A mitochondrion-targeting transit peptide spans 1 to 104 (KGKTITHGQS…RGNIHKHTRL (104 aa)). The Biotin carboxylation domain occupies 134 to 635 (VISKILIANN…STGWLDDLIL (502 aa)). One can recognise an ATP-grasp domain in the interval 292–484 (KTNFVSVPDD…LPATQLQIAM (193 aa)). An ATP-binding site is contributed by 332 to 337 (GGGGKG). Residue arginine 459 is part of the active site. One can recognise a Biotinyl-binding domain in the interval 763-837 (LEAELNPTQV…EAGDVIAKLT (75 aa)). Lysine 804 bears the N6-biotinyllysine mark. The 336-residue stretch at 1532 to 1867 (PYSVKDWLQP…KRDMSPPLLE (336 aa)) folds into the CoA carboxyltransferase N-terminal domain. The carboxyltransferase stretch occupies residues 1532–2187 (PYSVKDWLQP…EGQVIKRLQK (656 aa)). Residues arginine 1776, lysine 2080, and arginine 2082 each contribute to the CoA site. Positions 1871–2187 (RWDRDVDFKP…EGQVIKRLQK (317 aa)) constitute a CoA carboxyltransferase C-terminal domain.

Requires biotin as cofactor.

The protein resides in the mitochondrion. The catalysed reaction is hydrogencarbonate + acetyl-CoA + ATP = malonyl-CoA + ADP + phosphate + H(+). It catalyses the reaction N(6)-biotinyl-L-lysyl-[protein] + hydrogencarbonate + ATP = N(6)-carboxybiotinyl-L-lysyl-[protein] + ADP + phosphate + H(+). The protein operates within lipid metabolism; malonyl-CoA biosynthesis; malonyl-CoA from acetyl-CoA: step 1/1. Functionally, catalyzes the rate-limiting reaction in the mitochondrial fatty acid synthesis (FAS) type II pathway. Responsible for the production of the mitochondrial malonyl-CoA, used for the biosynthesis of the cofactor lipoic acid. This protein carries three functions: biotin carboxyl carrier protein, biotin carboxylase, and carboxyltransferase. This chain is Acetyl-CoA carboxylase, mitochondrial (HFA1), found in Saccharomyces cerevisiae (strain ATCC 204508 / S288c) (Baker's yeast).